A 614-amino-acid polypeptide reads, in one-letter code: Protein NRT1/ PTR FAMILY 7.3 (614 aa).

2 helical membrane-spanning segments follow: residues 41 to 61 (WVAG…FFGV) and 87 to 107 (WTGT…SYWG). At Thr-111 the chain carries Phosphothreonine. 9 consecutive transmembrane segments (helical) span residues 114–134 (IFQV…YMFL), 152–172 (MMEI…YGGY), 196–216 (IAFF…SNTI), 226–246 (WALG…LFLV), 355–375 (PIWL…SLFV), 390–410 (IPPA…IFLY), 435–455 (MGIG…VECY), 515–535 (LCMM…TMVV), and 559–579 (FYFL…ACAK). Residues 592–614 (MQDMSDDDYDTESEEEREKDSKV) form a disordered region. Positions 593–606 (QDMSDDDYDTESEE) are enriched in acidic residues.

Belongs to the major facilitator superfamily. Proton-dependent oligopeptide transporter (POT/PTR) (TC 2.A.17) family. In terms of tissue distribution, high expression in roots. Barely detected in shoots. Expressed in root pericycle cells close to the xylem.

Its subcellular location is the cell membrane. Functionally, low-affinity proton-dependent bidirectional nitrate transporter. Involved in nitrate loading into xylem and not in nitrate uptake. Not involved in histidine or dipeptides transport. The polypeptide is Protein NRT1/ PTR FAMILY 7.3 (NPF7.3) (Arabidopsis thaliana (Mouse-ear cress)).